The following is a 339-amino-acid chain: UDP-3-O-acylglucosamine N-acyltransferase (339 aa).

His-248 serves as the catalytic Proton acceptor.

The protein belongs to the transferase hexapeptide repeat family. LpxD subfamily. Homotrimer.

It carries out the reaction a UDP-3-O-[(3R)-3-hydroxyacyl]-alpha-D-glucosamine + a (3R)-hydroxyacyl-[ACP] = a UDP-2-N,3-O-bis[(3R)-3-hydroxyacyl]-alpha-D-glucosamine + holo-[ACP] + H(+). It functions in the pathway bacterial outer membrane biogenesis; LPS lipid A biosynthesis. Its function is as follows. Catalyzes the N-acylation of UDP-3-O-acylglucosamine using 3-hydroxyacyl-ACP as the acyl donor. Is involved in the biosynthesis of lipid A, a phosphorylated glycolipid that anchors the lipopolysaccharide to the outer membrane of the cell. This is UDP-3-O-acylglucosamine N-acyltransferase from Caulobacter vibrioides (strain NA1000 / CB15N) (Caulobacter crescentus).